Here is a 441-residue protein sequence, read N- to C-terminus: MSEMTPREIVHELDSHIIGQQKAKRSVAIALRNRWRRMQLAADLRQEVTPKNILMIGPTGVGKTEIARRLARLAKAPFIKVEATKFTEVGYVGKEVEQIIRDLTDSAIKLTREEQIKKCKFRAEEAAEERILDALLPKPKEDWDSEKSDGSATRQIFRKKLREGQLDDKEIEIDVSAPQAGIEIMSPPGMEEMTNQLQSMFQNMGPGASKRRKMPIKEAYKLLIEEEASKLINQEDLKEQAIELVEQHGIVFLDEIDKICKRGESSGPDVSREGVQRDLLPLVEGCTVNTKHGMVKTDHILFIASGAFQMSKPSDLIPELQGRLPIRVELDALTAGDFKRILTEPHASLTEQYIALMGTEGVTIEFTEDGIDSIAEAAWQVNERTENIGARRLHTVMERLMEELSYEASDKSGSVTVIDAAYVKASLDNLVQDEDLSRYIL.

ATP-binding positions include I18, 60–65 (GVGKTE), D254, E319, and R391.

This sequence belongs to the ClpX chaperone family. HslU subfamily. A double ring-shaped homohexamer of HslV is capped on each side by a ring-shaped HslU homohexamer. The assembly of the HslU/HslV complex is dependent on binding of ATP.

Its subcellular location is the cytoplasm. In terms of biological role, ATPase subunit of a proteasome-like degradation complex; this subunit has chaperone activity. The binding of ATP and its subsequent hydrolysis by HslU are essential for unfolding of protein substrates subsequently hydrolyzed by HslV. HslU recognizes the N-terminal part of its protein substrates and unfolds these before they are guided to HslV for hydrolysis. The chain is ATP-dependent protease ATPase subunit HslU from Shewanella pealeana (strain ATCC 700345 / ANG-SQ1).